Consider the following 220-residue polypeptide: Deoxyribose-phosphate aldolase 2 (220 aa).

The active-site Proton donor/acceptor is the aspartate 89. Lysine 151 serves as the catalytic Schiff-base intermediate with acetaldehyde. Residue lysine 180 is the Proton donor/acceptor of the active site.

It belongs to the DeoC/FbaB aldolase family. DeoC type 1 subfamily.

It is found in the cytoplasm. The catalysed reaction is 2-deoxy-D-ribose 5-phosphate = D-glyceraldehyde 3-phosphate + acetaldehyde. It participates in carbohydrate degradation; 2-deoxy-D-ribose 1-phosphate degradation; D-glyceraldehyde 3-phosphate and acetaldehyde from 2-deoxy-alpha-D-ribose 1-phosphate: step 2/2. Functionally, catalyzes a reversible aldol reaction between acetaldehyde and D-glyceraldehyde 3-phosphate to generate 2-deoxy-D-ribose 5-phosphate. This Staphylococcus aureus (strain MRSA252) protein is Deoxyribose-phosphate aldolase 2.